Reading from the N-terminus, the 460-residue chain is GTPase Der (460 aa).

EngA-type G domains are found at residues P21–D187 and V198–N373. Residues G27–S34, D74–F78, N141–E144, G204–S211, D251–I255, and N316–D319 each bind GTP. Residues T374 to C457 form the KH-like domain.

It belongs to the TRAFAC class TrmE-Era-EngA-EngB-Septin-like GTPase superfamily. EngA (Der) GTPase family. In terms of assembly, associates with the 50S ribosomal subunit.

Functionally, GTPase that plays an essential role in the late steps of ribosome biogenesis. This chain is GTPase Der, found in Treponema pallidum subsp. pallidum (strain SS14).